Reading from the N-terminus, the 296-residue chain is NAD kinase (296 aa).

Asp-73 acts as the Proton acceptor in catalysis. NAD(+) is bound by residues 73–74, Lys-78, 151–152, Arg-178, Asp-180, and 191–196; these read DG, NE, and TAHAMS.

Belongs to the NAD kinase family. A divalent metal cation is required as a cofactor.

It is found in the cytoplasm. It catalyses the reaction NAD(+) + ATP = ADP + NADP(+) + H(+). In terms of biological role, involved in the regulation of the intracellular balance of NAD and NADP, and is a key enzyme in the biosynthesis of NADP. Catalyzes specifically the phosphorylation on 2'-hydroxyl of the adenosine moiety of NAD to yield NADP. The chain is NAD kinase from Francisella tularensis subsp. holarctica (strain FTNF002-00 / FTA).